A 402-amino-acid chain; its full sequence is DNA replication and repair protein RecF (402 aa).

30–37 (GYNGIGKT) contacts ATP.

The protein belongs to the RecF family.

Its subcellular location is the cytoplasm. Functionally, the RecF protein is involved in DNA metabolism; it is required for DNA replication and normal SOS inducibility. RecF binds preferentially to single-stranded, linear DNA. It also seems to bind ATP. The sequence is that of DNA replication and repair protein RecF from Pseudarthrobacter chlorophenolicus (strain ATCC 700700 / DSM 12829 / CIP 107037 / JCM 12360 / KCTC 9906 / NCIMB 13794 / A6) (Arthrobacter chlorophenolicus).